Here is a 464-residue protein sequence, read N- to C-terminus: Soluble pyridine nucleotide transhydrogenase (464 aa).

Residue aspartate 35–cysteine 44 participates in FAD binding.

This sequence belongs to the class-I pyridine nucleotide-disulfide oxidoreductase family. FAD is required as a cofactor.

The protein resides in the cytoplasm. It catalyses the reaction NAD(+) + NADPH = NADH + NADP(+). Functionally, conversion of NADPH, generated by peripheral catabolic pathways, to NADH, which can enter the respiratory chain for energy generation. The sequence is that of Soluble pyridine nucleotide transhydrogenase from Stutzerimonas stutzeri (strain A1501) (Pseudomonas stutzeri).